The sequence spans 330 residues: Protein RecA (330 aa).

66-73 contributes to the ATP binding site; that stretch reads GPESSGKT.

This sequence belongs to the RecA family.

The protein resides in the cytoplasm. Can catalyze the hydrolysis of ATP in the presence of single-stranded DNA, the ATP-dependent uptake of single-stranded DNA by duplex DNA, and the ATP-dependent hybridization of homologous single-stranded DNAs. It interacts with LexA causing its activation and leading to its autocatalytic cleavage. This is Protein RecA from Bacteroides thetaiotaomicron (strain ATCC 29148 / DSM 2079 / JCM 5827 / CCUG 10774 / NCTC 10582 / VPI-5482 / E50).